We begin with the raw amino-acid sequence, 185 residues long: Elongation factor P (185 aa).

This sequence belongs to the elongation factor P family.

Its subcellular location is the cytoplasm. Its pathway is protein biosynthesis; polypeptide chain elongation. In terms of biological role, involved in peptide bond synthesis. Stimulates efficient translation and peptide-bond synthesis on native or reconstituted 70S ribosomes in vitro. Probably functions indirectly by altering the affinity of the ribosome for aminoacyl-tRNA, thus increasing their reactivity as acceptors for peptidyl transferase. The sequence is that of Elongation factor P from Staphylococcus carnosus (strain TM300).